We begin with the raw amino-acid sequence, 89 residues long: Small ribosomal subunit protein uS15 (89 aa).

It belongs to the universal ribosomal protein uS15 family. As to quaternary structure, part of the 30S ribosomal subunit. Forms a bridge to the 50S subunit in the 70S ribosome, contacting the 23S rRNA.

Its function is as follows. One of the primary rRNA binding proteins, it binds directly to 16S rRNA where it helps nucleate assembly of the platform of the 30S subunit by binding and bridging several RNA helices of the 16S rRNA. Forms an intersubunit bridge (bridge B4) with the 23S rRNA of the 50S subunit in the ribosome. This Elusimicrobium minutum (strain Pei191) protein is Small ribosomal subunit protein uS15.